A 335-amino-acid polypeptide reads, in one-letter code: Putative serine/threonine-protein kinase 040L (335 aa).

Residues 33–329 (YYYQEFHDEG…DRLTELHHHL (297 aa)) enclose the Protein kinase domain. Residues 39 to 47 (HDEGGYGSI) and lysine 62 each bind ATP. Aspartate 196 serves as the catalytic Proton acceptor.

It belongs to the protein kinase superfamily. Ser/Thr protein kinase family.

The sequence is that of Putative serine/threonine-protein kinase 040L from Invertebrate iridescent virus 3 (IIV-3).